Reading from the N-terminus, the 1049-residue chain is RTX-III toxin determinant A from serotype 2 (1049 aa).

Transmembrane regions (helical) follow at residues 154-170 (TIISGIQSVLGTVLAGI), 315-331 (ALIASSISLAISPLAFL), and 397-413 (LVGAPITLLVTGITGLI). Hemolysin-type calcium-binding repeat units follow at residues 743-760 (KGSKFRDIFHGADGDDLL), 761-778 (NGNDGDDILYGDKGNDEL), 779-796 (RGDNGNDQLYGGEGDDKL), 797-814 (LGGNGNNYLSGGDGNDEL), 825-842 (RGGKGDDKLYGSSGSDLL), and 843-860 (DGGEGNDYLEGGDGSDFY).

It belongs to the RTX prokaryotic toxin (TC 1.C.11) family. In terms of processing, palmitoylated by ApxIIIC. The toxin only becomes active when modified.

It localises to the secreted. Its subcellular location is the host cell membrane. Does not have hemolytic activity but shows a strong cytotoxicity towards alveolar macrophages and neutrophils. The polypeptide is RTX-III toxin determinant A from serotype 2 (apxIIIA) (Actinobacillus pleuropneumoniae (Haemophilus pleuropneumoniae)).